Consider the following 132-residue polypeptide: DNA-directed RNA polymerase subunit omega (132 aa).

A disordered region spans residues 89-109; it reads HSSESESIFNTSSQEEGTSFD. Residues 96-105 are compositionally biased toward polar residues; sequence IFNTSSQEEG.

Belongs to the RNA polymerase subunit omega family. The RNAP catalytic core consists of 2 alpha, 1 beta, 1 beta' and 1 omega subunit. When a sigma factor is associated with the core the holoenzyme is formed, which can initiate transcription.

It catalyses the reaction RNA(n) + a ribonucleoside 5'-triphosphate = RNA(n+1) + diphosphate. Its function is as follows. Promotes RNA polymerase assembly. Latches the N- and C-terminal regions of the beta' subunit thereby facilitating its interaction with the beta and alpha subunits. In Bartonella tribocorum (strain CIP 105476 / IBS 506), this protein is DNA-directed RNA polymerase subunit omega.